We begin with the raw amino-acid sequence, 327 residues long: MSERHLPDDQSSTIDPYLITSVRQTLAEQSAALQNLSKQLDSGQYQRVLNLIMNCKGHVILSGMGKSGHVGRKMSATLASTGTPSFFIHPAEAFHGDLGMITPYDLLILISASGETDEILKLVPSLKNFGNRIIAITNNGNSTLAKNADAVLELHMANETCPNNLAPTTSTTLTMAIGDALAIAMIHQRKFMPNDFARYHPGGSLGRRLLTRVADVMQHDVPAVQLDASFKTVIQRITSGCQGMVMVEDAEGGLAGIITDGDLRRFMEKEDSLTSATAAQMMTREPLTLPEDTMIIEAEEKMQKHRVSTLLVTNKANKVTGLVRIFD.

The region spanning 48 to 191 (VLNLIMNCKG…AIAMIHQRKF (144 aa)) is the SIS domain. 63-68 (GMGKSG) is a binding site for ATP. Substrate is bound by residues 82-83 (GT), histidine 89, histidine 95, 121-130 (KLVPSLKNFG), and 155-157 (HMA). Histidine 89 is a binding site for Zn(2+). CBS domains are found at residues 217–273 (MQHD…EDSL) and 282–327 (MTRE…RIFD).

Belongs to the SIS family. GutQ/KpsF subfamily. As to quaternary structure, homotetramer.

It catalyses the reaction D-arabinose 5-phosphate = D-ribulose 5-phosphate. Involved in the biosynthesis of K-antigen capsules. Catalyzes the reversible aldol-ketol isomerization between D-ribulose 5-phosphate (Ru5P) and D-arabinose 5-phosphate (A5P). This is Arabinose 5-phosphate isomerase KpsF (kpsF) from Escherichia coli.